The chain runs to 67 residues: Metallothionein-B (67 aa).

It belongs to the metallothionein superfamily. Type 4 family.

Its function is as follows. Metallothioneins have a high content of cysteine residues that bind various heavy metals. The sequence is that of Metallothionein-B from Sphaerechinus granularis (Purple sea urchin).